Here is a 553-residue protein sequence, read N- to C-terminus: Arginine--tRNA ligase (553 aa).

The 'HIGH' region signature appears at 122–132 (ANPTGFLHVGH).

This sequence belongs to the class-I aminoacyl-tRNA synthetase family. Monomer.

The protein resides in the cytoplasm. It carries out the reaction tRNA(Arg) + L-arginine + ATP = L-arginyl-tRNA(Arg) + AMP + diphosphate. The sequence is that of Arginine--tRNA ligase from Mesoplasma florum (strain ATCC 33453 / NBRC 100688 / NCTC 11704 / L1) (Acholeplasma florum).